A 494-amino-acid polypeptide reads, in one-letter code: Aspartyl/glutamyl-tRNA(Asn/Gln) amidotransferase subunit B (494 aa).

This sequence belongs to the GatB/GatE family. GatB subfamily. Heterotrimer of A, B and C subunits.

The enzyme catalyses L-glutamyl-tRNA(Gln) + L-glutamine + ATP + H2O = L-glutaminyl-tRNA(Gln) + L-glutamate + ADP + phosphate + H(+). It catalyses the reaction L-aspartyl-tRNA(Asn) + L-glutamine + ATP + H2O = L-asparaginyl-tRNA(Asn) + L-glutamate + ADP + phosphate + 2 H(+). Its function is as follows. Allows the formation of correctly charged Asn-tRNA(Asn) or Gln-tRNA(Gln) through the transamidation of misacylated Asp-tRNA(Asn) or Glu-tRNA(Gln) in organisms which lack either or both of asparaginyl-tRNA or glutaminyl-tRNA synthetases. The reaction takes place in the presence of glutamine and ATP through an activated phospho-Asp-tRNA(Asn) or phospho-Glu-tRNA(Gln). The sequence is that of Aspartyl/glutamyl-tRNA(Asn/Gln) amidotransferase subunit B from Rhizorhabdus wittichii (strain DSM 6014 / CCUG 31198 / JCM 15750 / NBRC 105917 / EY 4224 / RW1) (Sphingomonas wittichii).